The following is a 170-amino-acid chain: Large ribosomal subunit protein uL15 (170 aa).

Positions Met-1–Ser-12 are enriched in basic and acidic residues. A disordered region spans residues Met-1–Phe-50. Residues His-13–Gly-26 show a composition bias toward basic residues.

The protein belongs to the universal ribosomal protein uL15 family. In terms of assembly, part of the 50S ribosomal subunit.

In terms of biological role, binds to the 23S rRNA. The protein is Large ribosomal subunit protein uL15 of Chloroflexus aggregans (strain MD-66 / DSM 9485).